A 256-amino-acid polypeptide reads, in one-letter code: Nickel import ATP-binding protein NikD (256 aa).

One can recognise an ABC transporter domain in the interval 6–245 (LEIRGLRIET…PASATARTLL (240 aa)). An ATP-binding site is contributed by 38 to 45 (GASGSGKS).

It belongs to the ABC transporter superfamily. Nickel importer (TC 3.A.1.5.3) family. As to quaternary structure, the complex is composed of two ATP-binding proteins (NikD and NikE), two transmembrane proteins (NikB and NikC) and a solute-binding protein (NikA).

It is found in the cell inner membrane. It carries out the reaction Ni(2+)(out) + ATP + H2O = Ni(2+)(in) + ADP + phosphate + H(+). In terms of biological role, part of the ABC transporter complex NikABCDE involved in nickel import. Responsible for energy coupling to the transport system. The sequence is that of Nickel import ATP-binding protein NikD from Pseudomonas putida (strain ATCC 47054 / DSM 6125 / CFBP 8728 / NCIMB 11950 / KT2440).